A 162-amino-acid chain; its full sequence is Transcription elongation factor GreA (162 aa).

Positions 45 to 74 form a coiled coil; the sequence is ENAEYEAAREKQAFIEGRIKELEDMTARAE.

This sequence belongs to the GreA/GreB family.

In terms of biological role, necessary for efficient RNA polymerase transcription elongation past template-encoded arresting sites. The arresting sites in DNA have the property of trapping a certain fraction of elongating RNA polymerases that pass through, resulting in locked ternary complexes. Cleavage of the nascent transcript by cleavage factors such as GreA or GreB allows the resumption of elongation from the new 3'terminus. GreA releases sequences of 2 to 3 nucleotides. The sequence is that of Transcription elongation factor GreA from Rickettsia typhi (strain ATCC VR-144 / Wilmington).